A 64-amino-acid chain; its full sequence is MPKMKSHRGACKRFKTTSSGKIKRERMNGSHNLEKKNSKRCRRLHQTALLEGLKAKQIKRMIQA.

This sequence belongs to the bacterial ribosomal protein bL35 family.

This Pelodictyon phaeoclathratiforme (strain DSM 5477 / BU-1) protein is Large ribosomal subunit protein bL35.